An 829-amino-acid polypeptide reads, in one-letter code: Periplasmic nitrate reductase (829 aa).

Positions methionine 1 to alanine 29 form a signal peptide, tat-type signal. Positions isoleucine 41 to aspartate 97 constitute a 4Fe-4S Mo/W bis-MGD-type domain. Residues cysteine 48, cysteine 51, cysteine 55, and cysteine 83 each contribute to the [4Fe-4S] cluster site. Mo-bis(molybdopterin guanine dinucleotide) is bound by residues lysine 85, glutamine 152, asparagine 177, cysteine 181, tryptophan 214–methionine 221, serine 245–histidine 249, glutamine 264–aspartate 266, methionine 374, glutamine 378, asparagine 484, serine 510–aspartate 511, lysine 533, aspartate 560, and threonine 718–threonine 727. Phenylalanine 794 contributes to the substrate binding site. Residues asparagine 802 and lysine 819 each contribute to the Mo-bis(molybdopterin guanine dinucleotide) site.

This sequence belongs to the prokaryotic molybdopterin-containing oxidoreductase family. NasA/NapA/NarB subfamily. In terms of assembly, component of the periplasmic nitrate reductase NapAB complex composed of NapA and NapB. The cofactor is [4Fe-4S] cluster. It depends on Mo-bis(molybdopterin guanine dinucleotide) as a cofactor. Post-translationally, predicted to be exported by the Tat system. The position of the signal peptide cleavage has not been experimentally proven.

Its subcellular location is the periplasm. The catalysed reaction is 2 Fe(II)-[cytochrome] + nitrate + 2 H(+) = 2 Fe(III)-[cytochrome] + nitrite + H2O. Functionally, catalytic subunit of the periplasmic nitrate reductase complex NapAB. Receives electrons from NapB and catalyzes the reduction of nitrate to nitrite. This chain is Periplasmic nitrate reductase, found in Aliivibrio fischeri (strain MJ11) (Vibrio fischeri).